A 267-amino-acid polypeptide reads, in one-letter code: Exodeoxyribonuclease III (267 aa).

E34 lines the Mg(2+) pocket. Residue Y109 is part of the active site. Mg(2+)-binding residues include D151, N153, and D258. The Proton donor/acceptor role is filled by D151.

It belongs to the DNA repair enzymes AP/ExoA family. In terms of assembly, monomer. Mg(2+) is required as a cofactor. Requires Mn(2+) as cofactor.

The catalysed reaction is Exonucleolytic cleavage in the 3'- to 5'-direction to yield nucleoside 5'-phosphates.. In terms of biological role, major apurinic-apyrimidinic endonuclease of E.coli. It removes the damaged DNA at cytosines and guanines by cleaving on the 3'-side of the AP site by a beta-elimination reaction. The sequence is that of Exodeoxyribonuclease III (xthA) from Haemophilus influenzae (strain ATCC 51907 / DSM 11121 / KW20 / Rd).